The primary structure comprises 436 residues: Acetylcholine receptor non-alpha chain (436 aa).

The Extracellular segment spans residues 1–195; that stretch reads IIDVHEIDQI…IFYLELRRKP (195 aa). Asn62 carries an N-linked (GlcNAc...) asparagine glycan. Cysteines 89 and 103 form a disulfide. An N-linked (GlcNAc...) asparagine glycan is attached at Asn140. Helical transmembrane passes span 196 to 219, 227 to 245, and 261 to 280; these read LFYT…AFYL, VTLC…LLLK, and YLLF…VISL. Over 281 to 404 the chain is Cytoplasmic; the sequence is NLHFRRPSTH…WKFVARVLDR (124 aa). The chain crosses the membrane as a helical span at residues 405 to 423; that stretch reads LFLLLFSIACFLGTILILF.

It belongs to the ligand-gated ion channel (TC 1.A.9) family. Acetylcholine receptor (TC 1.A.9.1) subfamily.

Its subcellular location is the postsynaptic cell membrane. The protein resides in the cell membrane. Functionally, after binding acetylcholine, the AChR responds by an extensive change in conformation that affects all subunits and leads to opening of an ion-conducting channel across the plasma membrane. This is Acetylcholine receptor non-alpha chain from Onchocerca volvulus.